Consider the following 231-residue polypeptide: DNA mismatch repair protein MutH (231 aa).

The protein belongs to the MutH family.

The protein resides in the cytoplasm. In terms of biological role, sequence-specific endonuclease that cleaves unmethylated GATC sequences. It is involved in DNA mismatch repair. This is DNA mismatch repair protein MutH from Pectobacterium atrosepticum (strain SCRI 1043 / ATCC BAA-672) (Erwinia carotovora subsp. atroseptica).